The chain runs to 173 residues: C-phycocyanin-2 beta subunit (173 aa).

Residue N73 is modified to N4-methylasparagine. C83 and C154 together coordinate (2R,3E)-phycocyanobilin.

The protein belongs to the phycobiliprotein family. Heterodimer of an alpha and a beta subunit, which further assembles into trimers and the trimers into hexamers. Post-translationally, contains two covalently linked bilin chromophores.

The protein localises to the cellular thylakoid membrane. Functionally, light-harvesting photosynthetic bile pigment-protein from the phycobiliprotein complex (phycobilisome, PBS). Phycocyanin is the major phycobiliprotein in the PBS rod. This is C-phycocyanin-2 beta subunit (cpcB2) from Synechococcus sp. (strain ATCC 27144 / PCC 6301 / SAUG 1402/1) (Anacystis nidulans).